The following is a 292-amino-acid chain: tRNA dimethylallyltransferase (292 aa).

ATP is bound at residue 10–17 (GPTASGKS). Position 12-17 (12-17 (TASGKS)) interacts with substrate. 2 interaction with substrate tRNA regions span residues 35–38 (DSMQ) and 159–163 (QRIVR).

The protein belongs to the IPP transferase family. As to quaternary structure, monomer. Requires Mg(2+) as cofactor.

The enzyme catalyses adenosine(37) in tRNA + dimethylallyl diphosphate = N(6)-dimethylallyladenosine(37) in tRNA + diphosphate. Catalyzes the transfer of a dimethylallyl group onto the adenine at position 37 in tRNAs that read codons beginning with uridine, leading to the formation of N6-(dimethylallyl)adenosine (i(6)A). This chain is tRNA dimethylallyltransferase, found in Chelativorans sp. (strain BNC1).